We begin with the raw amino-acid sequence, 130 residues long: Ribonuclease P protein component 2 (130 aa).

This sequence belongs to the eukaryotic/archaeal RNase P protein component 2 family. In terms of assembly, consists of a catalytic RNA component and at least 4-5 protein subunits.

It localises to the cytoplasm. It catalyses the reaction Endonucleolytic cleavage of RNA, removing 5'-extranucleotides from tRNA precursor.. Part of ribonuclease P, a protein complex that generates mature tRNA molecules by cleaving their 5'-ends. The sequence is that of Ribonuclease P protein component 2 from Methanococcus vannielii (strain ATCC 35089 / DSM 1224 / JCM 13029 / OCM 148 / SB).